The sequence spans 151 residues: D-aminoacyl-tRNA deacylase (151 aa).

Positions 137–138 (GP) match the Gly-cisPro motif, important for rejection of L-amino acids motif.

The protein belongs to the DTD family. Homodimer.

The protein resides in the cytoplasm. The enzyme catalyses glycyl-tRNA(Ala) + H2O = tRNA(Ala) + glycine + H(+). The catalysed reaction is a D-aminoacyl-tRNA + H2O = a tRNA + a D-alpha-amino acid + H(+). In terms of biological role, an aminoacyl-tRNA editing enzyme that deacylates mischarged D-aminoacyl-tRNAs. Also deacylates mischarged glycyl-tRNA(Ala), protecting cells against glycine mischarging by AlaRS. Acts via tRNA-based rather than protein-based catalysis; rejects L-amino acids rather than detecting D-amino acids in the active site. By recycling D-aminoacyl-tRNA to D-amino acids and free tRNA molecules, this enzyme counteracts the toxicity associated with the formation of D-aminoacyl-tRNA entities in vivo and helps enforce protein L-homochirality. The sequence is that of D-aminoacyl-tRNA deacylase from Protochlamydia amoebophila (strain UWE25).